Here is a 629-residue protein sequence, read N- to C-terminus: Coiled-coil domain-containing protein 120 (629 aa).

An involved in CYTH2-binding region spans residues 31–70; that stretch reads RLRGLLDRQRALQEALSVKLQELRKVCLQEAELTGQLPPE. A coiled-coil region spans residues 109–173; it reads ELALEALERE…LRDFRARLGL (65 aa). 2 stretches are compositionally biased toward low complexity: residues 209–219 and 279–294; these read HSESSSLSESG and ASPT…SASS. The interval 209–356 is disordered; it reads HSESSSLSES…LFAARTRRSN (148 aa). The span at 323–332 shows a compositional bias: polar residues; it reads RQWSGSQDSQ. S355 and S357 each carry phosphoserine. Disordered stretches follow at residues 399–432 and 602–629; these read QPVP…GAPR and PSQA…FTDG. Low complexity predominate over residues 418 to 432; sequence ARPSSAAPASRGAPR. R432 carries the omega-N-methylarginine modification.

As to quaternary structure, interacts with NIN and CEP170; leading to recruit them to centrosomes. Interacts with CYTH2; this interaction is direct and stabilizes CCDC120, possibly by preventing ubiquitination. Post-translationally, ubiquitinated; interaction with CYTH2 may prevent ubiquitination.

Its subcellular location is the cytoplasm. The protein resides in the cytoskeleton. The protein localises to the microtubule organizing center. It localises to the centrosome. It is found in the centriole. Its subcellular location is the cell projection. The protein resides in the neuron projection. The protein localises to the growth cone. It localises to the endosome. Functionally, centriolar protein required for centriole subdistal appendage assembly and microtubule anchoring in interphase cells. Together with CCDC68, cooperate with subdistal appendage components ODF2, NIN and CEP170 for hierarchical subdistal appendage assembly. Recruits NIN and CEP170 to centrosomes. Also required for neurite growth. Localizes CYTH2 to vesicles to allow its transport along neurites, and subsequent ARF6 activation and neurite growth. The polypeptide is Coiled-coil domain-containing protein 120 (Mus musculus (Mouse)).